Here is a 626-residue protein sequence, read N- to C-terminus: ATP-dependent zinc metalloprotease FtsH 3 (626 aa).

Topologically, residues 1–7 (MNKLFRS) are cytoplasmic. The helical transmembrane segment at 8 to 28 (LAFYMLILVISVAIAVQLGGT) threads the bilayer. Over 29–103 (SQQTTQLVYS…LDFRQDNTSG (75 aa)) the chain is Extracellular. The helical transmembrane segment at 104–124 (IWAMLLQTLVPVVLVLLAFFF) threads the bilayer. Over 125–626 (IMQQTQGSGN…GGTSQVAPAF (502 aa)) the chain is Cytoplasmic. 197-204 (GPPGTGKT) contacts ATP. H420 contributes to the Zn(2+) binding site. E421 is an active-site residue. Residues H424 and D496 each contribute to the Zn(2+) site. Positions 602–626 (PPRPKPEPLKPRMVGGGTSQVAPAF) are disordered.

In the central section; belongs to the AAA ATPase family. The protein in the C-terminal section; belongs to the peptidase M41 family. Homohexamer. Zn(2+) is required as a cofactor.

The protein localises to the cell membrane. In terms of biological role, acts as a processive, ATP-dependent zinc metallopeptidase for both cytoplasmic and membrane proteins. Plays a role in the quality control of integral membrane proteins. This Symbiobacterium thermophilum (strain DSM 24528 / JCM 14929 / IAM 14863 / T) protein is ATP-dependent zinc metalloprotease FtsH 3.